A 1136-amino-acid polypeptide reads, in one-letter code: Type I inositol polyphosphate 5-phosphatase 13 (1136 aa).

WD repeat units lie at residues 147-185, 205-244, 259-297, 436-475, and 515-552; these read ETQT…EAGC, VTTS…VSHD, AHRG…KSLL, EDTR…RDVN, and SHNE…PLDN. Catalytic regions lie at residues 782 to 798 and 861 to 876; these read DMVA…FGIT and KKRI…YRDT. Residue K940 forms a Glycyl lysine isopeptide (Lys-Gly) (interchain with G-Cter in ubiquitin) linkage. The segment at 1104 to 1136 is disordered; that stretch reads KNLGGSRRYPTDITRNGSTRPRTEDSVRRGKSR. Residues 1124–1136 are compositionally biased toward basic and acidic residues; that stretch reads PRTEDSVRRGKSR.

The protein belongs to the inositol polyphosphate 5-phosphatase family. In terms of assembly, interacts with KIN10, but not with PHOT1. Mg(2+) serves as cofactor. As to expression, expressed in young seedlings and flowers. Highly expressed in anther and pollen grains, but not in pistils. Not detected in maturated roots, stems and rosette leaves.

The protein resides in the nucleus. The catalysed reaction is 1D-myo-inositol 1,4,5-trisphosphate + H2O = 1D-myo-inositol 1,4-bisphosphate + phosphate. Converts inositol 1,4,5-trisphosphate (Ins(1,4,5)P3) to inositol 1,4-bisphosphate. Modulates cotyledon vein development through regulating auxin homeostasis. Involved in blue light responses. Decreases the amount of KIN10 degraded by the proteasome under low nutrient conditions. Participates with IP5P12 in the control of Ins(1,4,5)P3/Ca(2+) levels that is crucial for maintaining pollen dormancy and regulating early germination of pollen. May modulate auxin transport by regulating vesicle trafficking and thereby plays a role in root gravitropism. This Arabidopsis thaliana (Mouse-ear cress) protein is Type I inositol polyphosphate 5-phosphatase 13.